A 729-amino-acid polypeptide reads, in one-letter code: Solute carrier family 15 member 2 (729 aa).

The interval 1–34 is disordered; that stretch reads MNPFQKNESKETLFSPVSIEEVPPRPPSPPKKPS. Topologically, residues 1-57 are cytoplasmic; the sequence is MNPFQKNESKETLFSPVSIEEVPPRPPSPPKKPSPTICGSNYPLSIAFIVVNEFCER. Position 9 is a phosphoserine (serine 9). At threonine 12 the chain carries Phosphothreonine. A compositionally biased stretch (pro residues) spans 24 to 33; that stretch reads PRPPSPPKKP. Serine 28 carries the phosphoserine modification. Residues 58-78 form a helical membrane-spanning segment; it reads FSYYGMKAVLILYFLYFLHWN. At 79-83 the chain is on the extracellular side; it reads EDTST. The helical transmembrane segment at 84-104 threads the bilayer; the sequence is SIYHAFSSLCYFTPILGAAIA. The Cytoplasmic segment spans residues 105–113; the sequence is DSWLGKFKT. A helical transmembrane segment spans residues 114 to 134; it reads IIYLSLVYVLGHVIKSLGALP. The Extracellular segment spans residues 135–139; it reads ILGGQ. Residues 140-160 form a helical membrane-spanning segment; sequence VVHTVLSLIGLSLIALGTGGI. Residues 161-183 lie on the Cytoplasmic side of the membrane; sequence KPCVAAFGGDQFEEKHAEERTRY. A helical transmembrane segment spans residues 184-204; it reads FSVFYLSINAGSLISTFITPM. At 205 to 217 the chain is on the extracellular side; sequence LRGDVQCFGEDCY. Residues 218-238 form a helical membrane-spanning segment; sequence ALAFGVPGLLMVIALVVFAMG. The Cytoplasmic portion of the chain corresponds to 239 to 295; that stretch reads SKIYNKPPPEGNIVAQVFKCIWFAISNRFKNRSGDIPKRQHWLDWAAEKYPKQLIMD. The chain crosses the membrane as a helical span at residues 296-316; that stretch reads VKALTRVLFLYIPLPMFWALL. Residues 317–343 are Extracellular-facing; sequence DQQGSRWTLQAIRMNRNLGFFVLQPDQ. Residues 344-364 traverse the membrane as a helical segment; the sequence is MQVLNPLLVLIFIPLFDFVIY. Topologically, residues 365-380 are cytoplasmic; the sequence is RLVSKCGINFSSLRKM. The helical transmembrane segment at 381–401 threads the bilayer; it reads AVGMILACLAFAVAAAVEIKI. Topologically, residues 402-611 are extracellular; that stretch reads NEMAPAQPGP…PANKMSIAWQ (210 aa). Positions 402–611 are extracellular domain (ECD); that stretch reads NEMAPAQPGP…PANKMSIAWQ (210 aa). N-linked (GlcNAc...) asparagine glycosylation is found at asparagine 435, asparagine 472, asparagine 528, asparagine 567, and asparagine 587. The helical transmembrane segment at 612-632 threads the bilayer; sequence LPQYALVTAGEVMFSVTGLEF. At 633-643 the chain is on the cytoplasmic side; it reads SYSQAPSSMKS. Residues 644–664 traverse the membrane as a helical segment; the sequence is VLQAAWLLTIAVGNIIVLVVA. At 665–674 the chain is on the extracellular side; it reads QFSGLVQWAE. Residues 675–695 form a helical membrane-spanning segment; that stretch reads FILFSCLLLVICLIFSIMGYY. At 696–729 the chain is on the cytoplasmic side; it reads YVPVKTEDMRGPADKHIPHIQGNMIKLETKKTKL.

This sequence belongs to the major facilitator superfamily. Proton-dependent oligopeptide transporter (POT/PTR) (TC 2.A.17) family. Interacts (via extracellular domain region) with trypsin. As to expression, expressed in kidney. Not detected in intestine. Highly expressed in macrophages.

The protein localises to the apical cell membrane. It is found in the cytoplasmic vesicle. Its subcellular location is the phagosome membrane. The protein resides in the cell membrane. The enzyme catalyses a dipeptide(out) + 2 H(+)(out) = a dipeptide(in) + 2 H(+)(in). It catalyses the reaction N-acetyl-D-muramoyl-L-alanyl-D-isoglutamine(out) + 3 H(+)(out) = N-acetyl-D-muramoyl-L-alanyl-D-isoglutamine(in) + 3 H(+)(in). It carries out the reaction glycyl-L-leucine(out) + 2 H(+)(out) = glycyl-L-leucine(in) + 2 H(+)(in). The catalysed reaction is glycyl-L-lysine(out) + 2 H(+)(out) = glycyl-L-lysine(in) + 2 H(+)(in). The enzyme catalyses glycyl-L-glutamate(out) + 3 H(+)(out) = glycyl-L-glutamate(in) + 3 H(+)(in). It catalyses the reaction L-alanyl-L-alanine(out) + 2 H(+)(out) = L-alanyl-L-alanine(in) + 2 H(+)(in). It carries out the reaction an L-amino acid tripeptide(out) + 2 H(+)(out) = an L-amino acid tripeptide(in) + 2 H(+)(in). The catalysed reaction is carnosine(out) + 2 H(+)(out) = carnosine(in) + 2 H(+)(in). Its function is as follows. Proton-coupled amino-acid transporter that transports oligopeptides of 2 to 4 amino acids with a preference for dipeptides. Transports neutral and anionic dipeptides with a proton to peptide stoichiometry of 2:1 or 3:1. In kidney, involved in the absorption of circulating di- and tripeptides from the glomerular filtrate. Can also transport beta-lactam antibiotics, such as the aminocephalosporin cefadroxil, and other antiviral and anticancer drugs. Transports the dipeptide-like aminopeptidase inhibitor bestatin. Also able to transport carnosine. Involved in innate immunity by promoting the detection of microbial pathogens by NOD-like receptors (NLRs). Mediates transport of bacterial peptidoglycans across the plasma membrane or, in macrophages, the phagosome membrane: catalyzes the transport of certain bacterial peptidoglycans, such as muramyl dipeptide (MDP), the NOD2 ligand. In Homo sapiens (Human), this protein is Solute carrier family 15 member 2.